Reading from the N-terminus, the 117-residue chain is uncharacterized protein (117 aa).

This is an uncharacterized protein from Rattus norvegicus (Rat).